Consider the following 305-residue polypeptide: Glycine--tRNA ligase alpha subunit (305 aa).

Belongs to the class-II aminoacyl-tRNA synthetase family. In terms of assembly, tetramer of two alpha and two beta subunits.

It localises to the cytoplasm. It catalyses the reaction tRNA(Gly) + glycine + ATP = glycyl-tRNA(Gly) + AMP + diphosphate. This Streptococcus pyogenes serotype M4 (strain MGAS10750) protein is Glycine--tRNA ligase alpha subunit.